A 175-amino-acid chain; its full sequence is FRTEGAEKLQKAFEIAKRIPIITSAKTLELAKVTQFKTMEFARYIEELARSVPLPPLILNCRAFVEEMFEAVQVDDPDEMGERIKERPALNAQDGIFVINPEMGRSNSPGGDSDDGSLSEQGQEIAVQVSVHPQSETKSIDTDSQDSSHFSPPDDTGSTESNSNYKDGSFESCQL.

The Cytoplasmic segment spans residues 1–175 (FRTEGAEKLQ…KDGSFESCQL (175 aa)). The disordered stretch occupies residues 85–175 (KERPALNAQD…KDGSFESCQL (91 aa)). Residues 145 to 175 (QDSSHFSPPDDTGSTESNSNYKDGSFESCQL) are compositionally biased toward polar residues.

Glycosylated.

The protein localises to the cell membrane. Functionally, component of the elastin-associated microfibrils. In Bos taurus (Bovine), this protein is Microfibril-associated glycoprotein 3 (MFAP3).